Consider the following 461-residue polypeptide: Dihydrolipoyl dehydrogenase (461 aa).

FAD contacts are provided by residues 33 to 41 (EAAEVGGVC), K50, and A112. A disulfide bond links C41 and C46. NAD(+)-binding positions include 173-177 (GGGAV), E196, and 263-266 (AVGR). FAD contacts are provided by D306 and A314. Residue H437 is the Proton acceptor of the active site.

It belongs to the class-I pyridine nucleotide-disulfide oxidoreductase family. In terms of assembly, homodimer. Requires FAD as cofactor.

The protein resides in the membrane. It catalyses the reaction N(6)-[(R)-dihydrolipoyl]-L-lysyl-[protein] + NAD(+) = N(6)-[(R)-lipoyl]-L-lysyl-[protein] + NADH + H(+). In terms of biological role, has chromate reductase activity. The polypeptide is Dihydrolipoyl dehydrogenase (Thermus scotoductus (strain ATCC 700910 / SA-01)).